A 267-amino-acid chain; its full sequence is Tryptophan synthase alpha chain (267 aa).

Catalysis depends on proton acceptor residues Glu47 and Asp58.

It belongs to the TrpA family. In terms of assembly, tetramer of two alpha and two beta chains.

It catalyses the reaction (1S,2R)-1-C-(indol-3-yl)glycerol 3-phosphate + L-serine = D-glyceraldehyde 3-phosphate + L-tryptophan + H2O. Its pathway is amino-acid biosynthesis; L-tryptophan biosynthesis; L-tryptophan from chorismate: step 5/5. In terms of biological role, the alpha subunit is responsible for the aldol cleavage of indoleglycerol phosphate to indole and glyceraldehyde 3-phosphate. The chain is Tryptophan synthase alpha chain from Chlorobium phaeovibrioides (strain DSM 265 / 1930) (Prosthecochloris vibrioformis (strain DSM 265)).